Reading from the N-terminus, the 144-residue chain is Sec-independent protein translocase protein TatB (144 aa).

The chain crosses the membrane as a helical span at residues 1–21; it reads MFEIGFWELVLVAIIGIVVVG. The tract at residues 97 to 144 is disordered; that stretch reads KMIDEPPYQEPPPAAHSVQTDAEAYRDTGIEPADKSSSPEHHHDDAAR. Over residues 119-144 the composition is skewed to basic and acidic residues; that stretch reads EAYRDTGIEPADKSSSPEHHHDDAAR.

Belongs to the TatB family. In terms of assembly, the Tat system comprises two distinct complexes: a TatABC complex, containing multiple copies of TatA, TatB and TatC subunits, and a separate TatA complex, containing only TatA subunits. Substrates initially bind to the TatABC complex, which probably triggers association of the separate TatA complex to form the active translocon.

The protein localises to the cell inner membrane. Functionally, part of the twin-arginine translocation (Tat) system that transports large folded proteins containing a characteristic twin-arginine motif in their signal peptide across membranes. Together with TatC, TatB is part of a receptor directly interacting with Tat signal peptides. TatB may form an oligomeric binding site that transiently accommodates folded Tat precursor proteins before their translocation. In Dichelobacter nodosus (strain VCS1703A), this protein is Sec-independent protein translocase protein TatB.